The primary structure comprises 595 residues: Beta-(1--&gt;2)glucan export ATP-binding/permease protein NdvA (595 aa).

The next 5 membrane-spanning stretches (helical) occupy residues 21 to 41 (FLLICTANITLAIITIAEPIL), 56 to 76 (LVTLAVWMCFGISNIIAYVLV), 129 to 149 (IWLEFMRQHLSTFVALFVLVP), 158 to 178 (LSIVLMVLAILYILIARLVMQ), and 252 to 272 (ISIVCVLLLGAFFVIKGQLSV). Positions 21-301 (FLLICTANIT…ISGFINLAVS (281 aa)) constitute an ABC transmembrane type-1 domain. The ABC transporter domain occupies 335 to 569 (IQFHHVTYEF…DGHFYKLLKA (235 aa)). ATP is bound at residue 368-375 (GPTGAGKT).

It belongs to the ABC transporter superfamily. Beta-(1--&gt;2)glucan exporter (TC 3.A.1.108.1) family. In terms of assembly, homodimer.

The protein localises to the cell inner membrane. The catalysed reaction is [(1-&gt;2)-beta-D-glucosyl](n)(in) + ATP + H2O = [(1-&gt;2)-beta-D-glucosyl](n)(out) + ADP + phosphate + H(+). Its function is as follows. Involved in beta-(1--&gt;2)glucan export. Transmembrane domains (TMD) form a pore in the inner membrane and the ATP-binding domain (NBD) is responsible for energy generation. The chain is Beta-(1--&gt;2)glucan export ATP-binding/permease protein NdvA from Bartonella bacilliformis (strain ATCC 35685 / KC583 / Herrer 020/F12,63).